The primary structure comprises 419 residues: Pyrophosphate--fructose 6-phosphate 1-phosphotransferase (419 aa).

A diphosphate-binding site is contributed by G12. A Mg(2+)-binding site is contributed by D107. Substrate contacts are provided by residues T132–D134, M178–R180, E238, and Y300–R303. Residue D134 is the Proton acceptor of the active site.

The protein belongs to the phosphofructokinase type A (PFKA) family. PPi-dependent PFK group II subfamily. Clade 'Short' sub-subfamily. As to quaternary structure, homodimer. Requires Mg(2+) as cofactor. Co(2+) serves as cofactor. The cofactor is Mn(2+). It depends on Ni(2+) as a cofactor.

Its subcellular location is the cytoplasm. The catalysed reaction is beta-D-fructose 6-phosphate + diphosphate = beta-D-fructose 1,6-bisphosphate + phosphate + H(+). It participates in carbohydrate degradation; glycolysis; D-glyceraldehyde 3-phosphate and glycerone phosphate from D-glucose: step 3/4. With respect to regulation, non-allosteric. In terms of biological role, catalyzes the phosphorylation of D-fructose 6-phosphate, the first committing step of glycolysis. Uses inorganic phosphate (PPi) as phosphoryl donor instead of ATP like common ATP-dependent phosphofructokinases (ATP-PFKs), which renders the reaction reversible, and can thus function both in glycolysis and gluconeogenesis. Consistently, PPi-PFK can replace the enzymes of both the forward (ATP-PFK) and reverse (fructose-bisphosphatase (FBPase)) reactions. The chain is Pyrophosphate--fructose 6-phosphate 1-phosphotransferase from Thermotoga maritima (strain ATCC 43589 / DSM 3109 / JCM 10099 / NBRC 100826 / MSB8).